The primary structure comprises 617 residues: DNA mismatch repair protein MutL (617 aa).

Residues 363-394 form a disordered region; it reads YAPAYGARPPQPSAWSVDTSPHRPLDDGQNRF. Over residues 382–392 the composition is skewed to basic and acidic residues; sequence SPHRPLDDGQN.

Belongs to the DNA mismatch repair MutL/HexB family.

This protein is involved in the repair of mismatches in DNA. It is required for dam-dependent methyl-directed DNA mismatch repair. May act as a 'molecular matchmaker', a protein that promotes the formation of a stable complex between two or more DNA-binding proteins in an ATP-dependent manner without itself being part of a final effector complex. The sequence is that of DNA mismatch repair protein MutL from Allorhizobium ampelinum (strain ATCC BAA-846 / DSM 112012 / S4) (Agrobacterium vitis (strain S4)).